The following is a 788-amino-acid chain: Choline transporter-like protein 1 (788 aa).

A helical transmembrane segment spans residues 98–118 (FLFFVFLCGWVVVASLGIMWG). A glycan (N-linked (GlcNAc...) asparagine) is linked at N276. Helical transmembrane passes span 329-349 (WWQTLILIFAAGMLSFIWTVI), 352-372 (LLGSLLIWLSIFLVLGALGFG), 409-429 (FVVAIATSVLLVIFLLVILFI), and 458-478 (LFPFLLHIGVFALWGSIAIWL). An N-linked (GlcNAc...) asparagine glycan is attached at N497. 5 consecutive transmembrane segments (helical) span residues 531–551 (LFAFFWLSCFVTALGDIALAG), 583–603 (LGSIAFGSLIIAIVKIIRVML), 620–640 (WFLMCLKCCFWCLEMFFKFLT), 679–699 (AGILLFLGKAMITLGMGILSF), and 718–738 (YYFVPIVIVVIGSYFMADLFF).

Belongs to the CTL (choline transporter-like) family.

It is found in the membrane. This is Choline transporter-like protein 1 (chtl-1) from Caenorhabditis briggsae.